The primary structure comprises 122 residues: Small ribosomal subunit protein uS13 (122 aa).

Residues 94–122 are disordered; sequence GLPVRGQSTQKNARTRKGPRKTVAGKKGK. The segment covering 106–122 has biased composition (basic residues); sequence ARTRKGPRKTVAGKKGK.

It belongs to the universal ribosomal protein uS13 family. As to quaternary structure, part of the 30S ribosomal subunit. Forms a loose heterodimer with protein S19. Forms two bridges to the 50S subunit in the 70S ribosome.

In terms of biological role, located at the top of the head of the 30S subunit, it contacts several helices of the 16S rRNA. In the 70S ribosome it contacts the 23S rRNA (bridge B1a) and protein L5 of the 50S subunit (bridge B1b), connecting the 2 subunits; these bridges are implicated in subunit movement. Contacts the tRNAs in the A and P-sites. The sequence is that of Small ribosomal subunit protein uS13 from Mycoplasmopsis synoviae (strain 53) (Mycoplasma synoviae).